The chain runs to 160 residues: UPF0262 protein ELI_10965 (160 aa).

It belongs to the UPF0262 family.

This Erythrobacter litoralis (strain HTCC2594) protein is UPF0262 protein ELI_10965.